A 389-amino-acid chain; its full sequence is MPLPTSPLRLAMVAGEPSGDLLAASMLDGLAARLPDTTQYFGIGGPRMIAKGFDAHFAMEKLSVRGYVEALKHVPEILGIRNELKRQLLAEPPSAFIGVDAPDFNFGLEHPLRDAGIPTIHFVCPSIWAWRGGRIKKIVKAVDHMLCVFPFEKALLEKSGVTATYVGHPLADEIPLEPDTAGARLELGLPESGPVIAVLPGSRRSEIALIGPTFFDAMELMLQREPGVRFVMPAATPALRELLKPLVDAHANLPLTLTDGNAQRAMTAADAILVKSGTVTLEAALLKKPMVISYKVPWLTGQIMRRQGYLPYVGLPNILAGRFVVPEILQHFATPEALADATLTQLRDDANRRTLTEIFTEMHHVLKQNTAQRAAEAVVGVIEARRGRP.

This sequence belongs to the LpxB family.

It catalyses the reaction a lipid X + a UDP-2-N,3-O-bis[(3R)-3-hydroxyacyl]-alpha-D-glucosamine = a lipid A disaccharide + UDP + H(+). It functions in the pathway bacterial outer membrane biogenesis; LPS lipid A biosynthesis. Condensation of UDP-2,3-diacylglucosamine and 2,3-diacylglucosamine-1-phosphate to form lipid A disaccharide, a precursor of lipid A, a phosphorylated glycolipid that anchors the lipopolysaccharide to the outer membrane of the cell. In Paraburkholderia phymatum (strain DSM 17167 / CIP 108236 / LMG 21445 / STM815) (Burkholderia phymatum), this protein is Lipid-A-disaccharide synthase.